The following is a 659-amino-acid chain: Nitrate import ATP-binding protein NrtC (659 aa).

The ABC transporter domain occupies 5-239 (LAVDHVHQVF…RPRQRLEMME (235 aa)). 42–49 (GHSGCGKS) is a binding site for ATP. The segment at 255–278 (QQQRRAKRRAKAAAPAPAVAASQQ) is linker. The interval 279–659 (KTVRLGFLPG…VAPIPLATSA (381 aa)) is nrtA-like.

Belongs to the ABC transporter superfamily. Nitrate/nitrite/cyanate uptake transporter (NitT) (TC 3.A.1.16) family. As to quaternary structure, the complex is composed of two ATP-binding proteins (NrtC and NrtD), two transmembrane proteins (NrtB) and a solute-binding protein (NrtA).

It localises to the cell inner membrane. It carries out the reaction nitrate(out) + ATP + H2O = nitrate(in) + ADP + phosphate + H(+). Transport is inhibited by ammonium. The C-terminal domain of NrtC is involved in the ammonium-promoted inhibition of the nitrate/nitrite transporter. Its function is as follows. Part of the ABC transporter complex NrtABCD involved in nitrate uptake. The complex is probably also involved in nitrite transport. Probably responsible for energy coupling to the transport system. The sequence is that of Nitrate import ATP-binding protein NrtC from Synechococcus elongatus (strain ATCC 33912 / PCC 7942 / FACHB-805) (Anacystis nidulans R2).